Consider the following 208-residue polypeptide: Ribonuclease HII (208 aa).

In terms of domain architecture, RNase H type-2 spans 12-201 (ELVAGVDEVG…VRALLEPVAV (190 aa)). A divalent metal cation contacts are provided by aspartate 18, glutamate 19, and aspartate 110.

The protein belongs to the RNase HII family. The cofactor is Mn(2+). Requires Mg(2+) as cofactor.

Its subcellular location is the cytoplasm. The enzyme catalyses Endonucleolytic cleavage to 5'-phosphomonoester.. Functionally, endonuclease that specifically degrades the RNA of RNA-DNA hybrids. The protein is Ribonuclease HII of Ectopseudomonas mendocina (strain ymp) (Pseudomonas mendocina).